Consider the following 1072-residue polypeptide: DNA-directed RNA polymerase subunit beta (1072 aa).

It belongs to the RNA polymerase beta chain family. In terms of assembly, in plastids the minimal PEP RNA polymerase catalytic core is composed of four subunits: alpha, beta, beta', and beta''. When a (nuclear-encoded) sigma factor is associated with the core the holoenzyme is formed, which can initiate transcription.

The protein localises to the plastid. Its subcellular location is the chloroplast. The enzyme catalyses RNA(n) + a ribonucleoside 5'-triphosphate = RNA(n+1) + diphosphate. Its function is as follows. DNA-dependent RNA polymerase catalyzes the transcription of DNA into RNA using the four ribonucleoside triphosphates as substrates. The sequence is that of DNA-directed RNA polymerase subunit beta from Olimarabidopsis pumila (Dwarf rocket).